The following is a 559-amino-acid chain: Sesquiterpene synthase (559 aa).

Mg(2+)-binding residues include aspartate 312, aspartate 316, and glutamate 464. Residues 312 to 316 carry the DDXXD motif motif; the sequence is DDIYD.

The protein belongs to the terpene synthase family. Tpsa subfamily. Requires Mg(2+) as cofactor. Mn(2+) is required as a cofactor.

Catalyzes alpha-humulene and delta-cadinene, as well as beta-elemene, the thermal rearrangement product of germacrene A and several other bicyclic sesquiterpenes when incubated with (2E,6E)-farnesyl diphosphate. The chain is Sesquiterpene synthase from Santalum austrocaledonicum (Sandalwood).